The sequence spans 413 residues: Sensor protein SphS (413 aa).

The Histidine kinase domain maps to 176-398; it reads DVAHELKTPL…WLRVQLPQEP (223 aa). The residue at position 179 (H179) is a Phosphohistidine; by autocatalysis.

It localises to the cytoplasm. The catalysed reaction is ATP + protein L-histidine = ADP + protein N-phospho-L-histidine.. Member of the two-component regulatory system SphR/SphS. Sensory kinase. Is involved in inducible production of alkaline phosphatase in response to phosphate limitation as it is directly involved in the regulation of phoA transcription in response to phosphate limitation. SphS functions as a protein kinase that phosphorylates SphR. This Synechococcus elongatus (strain ATCC 33912 / PCC 7942 / FACHB-805) (Anacystis nidulans R2) protein is Sensor protein SphS (sphS).